The following is a 24-amino-acid chain: Ascaphin-7 (24 aa).

As to expression, expressed by the skin glands.

It localises to the secreted. In terms of biological role, antimicrobial peptide that shows higher potency against Gram-negative bacteria than against Gram-positive bacteria. Has a very week hemolytic activity. This Ascaphus truei (Coastal tailed frog) protein is Ascaphin-7.